The following is a 62-amino-acid chain: MRLLFLLFLLLVCLAQKTSGRKRNTKFRQCEKMGGICKYQKTHGCSILPAECKSRYKHCCRL.

The first 20 residues, 1 to 20, serve as a signal peptide directing secretion; the sequence is MRLLFLLFLLLVCLAQKTSG. 3 cysteine pairs are disulfide-bonded: Cys30/Cys59, Cys37/Cys52, and Cys45/Cys60.

It belongs to the beta-defensin family.

Its subcellular location is the secreted. In terms of biological role, has antibacterial activity. The protein is Beta-defensin 33 (Defb33) of Rattus norvegicus (Rat).